Consider the following 423-residue polypeptide: Histidine--tRNA ligase (423 aa).

It belongs to the class-II aminoacyl-tRNA synthetase family. In terms of assembly, homodimer.

The protein localises to the cytoplasm. It carries out the reaction tRNA(His) + L-histidine + ATP = L-histidyl-tRNA(His) + AMP + diphosphate + H(+). The protein is Histidine--tRNA ligase of Moorella thermoacetica (strain ATCC 39073 / JCM 9320).